The chain runs to 71 residues: Large ribosomal subunit protein bL31 (71 aa).

The Zn(2+) site is built by C16, C18, C36, and C39.

The protein belongs to the bacterial ribosomal protein bL31 family. Type A subfamily. As to quaternary structure, part of the 50S ribosomal subunit. Zn(2+) is required as a cofactor.

Its function is as follows. Binds the 23S rRNA. The chain is Large ribosomal subunit protein bL31 from Syntrophus aciditrophicus (strain SB).